The following is a 668-amino-acid chain: Transketolase 2 (668 aa).

Histidine 26 lines the substrate pocket. Thiamine diphosphate-binding positions include histidine 66 and 114-116; that span reads GPL. Residue aspartate 155 coordinates Mg(2+). Thiamine diphosphate contacts are provided by glycine 156 and asparagine 185. Mg(2+)-binding residues include asparagine 185 and isoleucine 187. Residues histidine 261, arginine 358, and serine 385 each coordinate substrate. Histidine 261 is a thiamine diphosphate binding site. Residue glutamate 413 is the Proton donor of the active site. Thiamine diphosphate is bound at residue phenylalanine 439. Positions 463, 471, and 522 each coordinate substrate.

It belongs to the transketolase family. As to quaternary structure, homodimer. It depends on Mg(2+) as a cofactor. Ca(2+) is required as a cofactor. The cofactor is Mn(2+). Co(2+) serves as cofactor. Requires thiamine diphosphate as cofactor.

The enzyme catalyses D-sedoheptulose 7-phosphate + D-glyceraldehyde 3-phosphate = aldehydo-D-ribose 5-phosphate + D-xylulose 5-phosphate. Its function is as follows. Catalyzes the transfer of a two-carbon ketol group from a ketose donor to an aldose acceptor, via a covalent intermediate with the cofactor thiamine pyrophosphate. The chain is Transketolase 2 (tktB) from Pasteurella multocida (strain Pm70).